A 501-amino-acid polypeptide reads, in one-letter code: Glycerol kinase (501 aa).

Thr14 provides a ligand contact to ADP. Positions 14, 15, and 16 each coordinate ATP. Thr14 lines the sn-glycerol 3-phosphate pocket. An ADP-binding site is contributed by Arg18. 4 residues coordinate sn-glycerol 3-phosphate: Arg84, Glu85, Tyr135, and Asp244. Glycerol-binding residues include Arg84, Glu85, Tyr135, Asp244, and Gln245. Thr266 and Gly309 together coordinate ADP. 4 residues coordinate ATP: Thr266, Gly309, Gln313, and Gly410. Residues Gly410 and Asn414 each coordinate ADP.

Belongs to the FGGY kinase family.

It carries out the reaction glycerol + ATP = sn-glycerol 3-phosphate + ADP + H(+). It functions in the pathway polyol metabolism; glycerol degradation via glycerol kinase pathway; sn-glycerol 3-phosphate from glycerol: step 1/1. Inhibited by fructose 1,6-bisphosphate (FBP). In terms of biological role, key enzyme in the regulation of glycerol uptake and metabolism. Catalyzes the phosphorylation of glycerol to yield sn-glycerol 3-phosphate. This is Glycerol kinase from Deinococcus radiodurans (strain ATCC 13939 / DSM 20539 / JCM 16871 / CCUG 27074 / LMG 4051 / NBRC 15346 / NCIMB 9279 / VKM B-1422 / R1).